The chain runs to 864 residues: N-alpha-acetyltransferase 16, NatA auxiliary subunit (864 aa).

7 TPR repeats span residues 46–79 (GETL…DVRS), 80–113 (HVCW…DKDN), 148–184 (RASW…PPNK), 224–257 (LLVE…NAEN), 374–407 (IWVQ…TPTL), 408–441 (IELF…DTAD), and 485–514 (MWFE…VERH). The disordered stretch occupies residues 594–646 (KMLSKQRRAQKKAKVEEERKHTERERQQKNQKKKREEEEEVTSGHKEELIPEK). Over residues 595-605 (MLSKQRRAQKK) the composition is skewed to basic residues. 2 stretches are compositionally biased toward basic and acidic residues: residues 606 to 621 (AKVE…ERQQ) and 635 to 646 (TSGHKEELIPEK).

As to quaternary structure, component of the N-terminal acetyltransferase A (NatA) complex composed of NAA10 and NAA16. As to expression, highest levels in the kidney and testes. Moderate expression in the liver, thymus and skin.

Its function is as follows. Auxillary subunit of the N-terminal acetyltransferase A (NatA) complex which displays alpha (N-terminal) acetyltransferase activity. In Mus musculus (Mouse), this protein is N-alpha-acetyltransferase 16, NatA auxiliary subunit (Naa16).